Consider the following 464-residue polypeptide: Chitotriosidase-1 (464 aa).

The signal sequence occupies residues 1–21 (MVQSLAWAGVMTLLMVQWGSA). The region spanning 22-386 (AKLVCYLTNW…RTLRQELNLP (365 aa)) is the GH18 domain. Cys26 and Cys51 are joined by a disulfide. Chitin-binding positions include 70–71 (EH) and 97–100 (GGWT). Glu140 acts as the Proton donor in catalysis. 210–213 (MAYD) provides a ligand contact to chitin. Cys307 and Cys368 are oxidised to a cystine. A disordered region spans residues 385-416 (LPSETPRSPEQIIPEPRPSSMPEQGPSPGLDN). Residues 415 to 464 (DNFCQGKADGVYPNPGDESTYYNCGGGRLFQQSCPPGLVFRASCKCCTWS) form the Chitin-binding type-2 domain. A disulfide bond links Cys448 and Cys461.

It belongs to the glycosyl hydrolase 18 family. Chitinase class II subfamily. As to quaternary structure, monomer. Highly expressed in tongue, stomach, kidney, brain, skin, testis, and bone marrow. Low level of expression was found in lung, heart, spleen, small intestine, and liver. Not detectable in pancreas, salivary gland, large intestine, uterus, or peripheral blood mononuclear cells (PBMC).

It localises to the secreted. The protein localises to the lysosome. The enzyme catalyses Random endo-hydrolysis of N-acetyl-beta-D-glucosaminide (1-&gt;4)-beta-linkages in chitin and chitodextrins.. Its function is as follows. Degrades chitin, chitotriose and chitobiose. May participate in the defense against nematodes and other pathogens. In Mus musculus (Mouse), this protein is Chitotriosidase-1 (Chit1).